The following is a 416-amino-acid chain: Lysosome-associated membrane glycoprotein 3 (416 aa).

The signal sequence occupies residues 1–27 (MPRQLSAAAVLFASLAVILHDGSQMRA). The Lumenal segment spans residues 28–381 (KAFPKTRDYS…NVDECSSDYT (354 aa)). The tract at residues 135 to 217 (PPTITPPAHT…ASTVPGSTLA (83 aa)) is disordered. A compositionally biased stretch (polar residues) spans 142–170 (AHTTGTSSSTVNHTTGNATQPSNQTTLPA). Residues 188–208 (PTHAPGTTAAAHNTTRTAAPA) show a composition bias toward low complexity. N-linked (GlcNAc...) asparagine glycosylation is present at Asn-200. A disulfide bond links Cys-237 and Cys-274. An N-linked (GlcNAc...) asparagine glycan is attached at Asn-291. Cys-339 and Cys-376 are joined by a disulfide. A helical membrane pass occupies residues 382–402 (IVLPVIGAIVVGLCLVGMGVY). Residues 403–416 (KIRLRCQSSGYQRI) are Cytoplasmic-facing.

It belongs to the LAMP family. As to quaternary structure, monomer. Interacts with FURIN.

It is found in the cell surface. It localises to the lysosome membrane. Its subcellular location is the cytoplasmic vesicle membrane. The protein resides in the early endosome membrane. In terms of biological role, lysosomal membrane glycoprotein which plays a role in the unfolded protein response (UPR) that contributes to protein degradation and cell survival during proteasomal dysfunction. Plays a role in the process of fusion of the lysosome with the autophagosome, thereby modulating the autophagic process. Promotes hepatocellular lipogenesis through activation of the PI3K/Akt pathway. May also play a role in dendritic cell function and in adaptive immunity. This chain is Lysosome-associated membrane glycoprotein 3 (LAMP3), found in Macaca mulatta (Rhesus macaque).